The chain runs to 169 residues: 3-hydroxyanthranilate 3,4-dioxygenase (169 aa).

Arginine 44 serves as a coordination point for O2. Fe cation is bound by residues histidine 48, glutamate 54, and histidine 92. Substrate is bound at residue glutamate 54. 2 residues coordinate substrate: arginine 96 and glutamate 106. A divalent metal cation-binding residues include cysteine 121, cysteine 124, cysteine 158, and cysteine 160.

Belongs to the 3-HAO family. Fe(2+) serves as cofactor.

The protein resides in the cytoplasm. It carries out the reaction 3-hydroxyanthranilate + O2 = (2Z,4Z)-2-amino-3-carboxymuconate 6-semialdehyde. It functions in the pathway cofactor biosynthesis; NAD(+) biosynthesis; quinolinate from L-kynurenine: step 3/3. Functionally, catalyzes the oxidative ring opening of 3-hydroxyanthranilate to 2-amino-3-carboxymuconate semialdehyde, which spontaneously cyclizes to quinolinate. In Meyerozyma guilliermondii (strain ATCC 6260 / CBS 566 / DSM 6381 / JCM 1539 / NBRC 10279 / NRRL Y-324) (Yeast), this protein is 3-hydroxyanthranilate 3,4-dioxygenase.